We begin with the raw amino-acid sequence, 144 residues long: 3-dehydroquinate dehydratase (144 aa).

Tyr24 acts as the Proton acceptor in catalysis. Substrate is bound by residues Asn76, His82, and Asp89. The active-site Proton donor is the His102. Substrate-binding positions include 103–104 (LS) and Arg113.

The protein belongs to the type-II 3-dehydroquinase family. In terms of assembly, homododecamer.

It catalyses the reaction 3-dehydroquinate = 3-dehydroshikimate + H2O. It participates in metabolic intermediate biosynthesis; chorismate biosynthesis; chorismate from D-erythrose 4-phosphate and phosphoenolpyruvate: step 3/7. Catalyzes a trans-dehydration via an enolate intermediate. The chain is 3-dehydroquinate dehydratase from Bordetella petrii (strain ATCC BAA-461 / DSM 12804 / CCUG 43448).